Reading from the N-terminus, the 507-residue chain is ATP synthase subunit alpha, chloroplastic (507 aa).

170–177 is an ATP binding site; it reads GDRQTGKT.

Belongs to the ATPase alpha/beta chains family. In terms of assembly, F-type ATPases have 2 components, CF(1) - the catalytic core - and CF(0) - the membrane proton channel. CF(1) has five subunits: alpha(3), beta(3), gamma(1), delta(1), epsilon(1). CF(0) has four main subunits: a, b, b' and c.

It localises to the plastid. Its subcellular location is the chloroplast thylakoid membrane. It carries out the reaction ATP + H2O + 4 H(+)(in) = ADP + phosphate + 5 H(+)(out). Produces ATP from ADP in the presence of a proton gradient across the membrane. The alpha chain is a regulatory subunit. This chain is ATP synthase subunit alpha, chloroplastic, found in Nicotiana tomentosiformis (Tobacco).